Reading from the N-terminus, the 360-residue chain is Serine/threonine transporter SstT (360 aa).

Helical transmembrane passes span 17 to 37 (IGIG…ITVI), 40 to 60 (FGSL…LTLV), 78 to 98 (VICL…GASY), 138 to 158 (ALAT…GLAF), 179 to 199 (VVGW…FDTI), 212 to 232 (LLLL…NPLI), 295 to 315 (MAGA…TLGI), 316 to 336 (SVDF…AAGA), and 339 to 359 (VAGG…VPYV).

This sequence belongs to the dicarboxylate/amino acid:cation symporter (DAACS) (TC 2.A.23) family.

The protein resides in the cell membrane. The enzyme catalyses L-serine(in) + Na(+)(in) = L-serine(out) + Na(+)(out). It catalyses the reaction L-threonine(in) + Na(+)(in) = L-threonine(out) + Na(+)(out). Functionally, involved in the import of serine and threonine into the cell, with the concomitant import of sodium (symport system). In Streptococcus suis (strain 05ZYH33), this protein is Serine/threonine transporter SstT.